The chain runs to 548 residues: Chaperonin GroEL (548 aa).

ATP contacts are provided by residues 30–33, K51, 87–91, G415, 479–481, and D495; these read TLGP, DGTTT, and NAA. The interval 526–548 is disordered; sequence REDKSSDVASSPAGGMGGMGGMM. Positions 539–548 are enriched in gly residues; that stretch reads GGMGGMGGMM.

Belongs to the chaperonin (HSP60) family. As to quaternary structure, forms a cylinder of 14 subunits composed of two heptameric rings stacked back-to-back. Interacts with the co-chaperonin GroES.

The protein localises to the cytoplasm. The catalysed reaction is ATP + H2O + a folded polypeptide = ADP + phosphate + an unfolded polypeptide.. Its function is as follows. Together with its co-chaperonin GroES, plays an essential role in assisting protein folding. The GroEL-GroES system forms a nano-cage that allows encapsulation of the non-native substrate proteins and provides a physical environment optimized to promote and accelerate protein folding. The protein is Chaperonin GroEL of Buchnera aphidicola subsp. Schizaphis graminum (strain Sg).